Reading from the N-terminus, the 193-residue chain is DNA damage-inducible transcript 4-like protein (193 aa).

This sequence belongs to the DDIT4 family.

The protein resides in the cytoplasm. Inhibits cell growth by regulating the TOR signaling pathway upstream of the TSC1-TSC2 complex and downstream of AKT1. This chain is DNA damage-inducible transcript 4-like protein (DDIT4L), found in Pongo abelii (Sumatran orangutan).